Here is a 437-residue protein sequence, read N- to C-terminus: Na(+)/H(+) antiporter NhaA (437 aa).

11 helical membrane-spanning segments follow: residues 12–32, 65–85, 103–123, 133–153, 162–182, 186–206, 214–234, 308–328, 333–353, 377–397, and 412–432; these read SMNITASILLFVTAIAAAVIA, LTMIEFINDGLMTIFFLMVGL, ALPFIAACGGMVVPVVIYSMV, GLAIPMATDIAFSLGVLSLLG, IFLTAFAVVDDIGGILVIAIF, HVAYEYLLWAALLYVLLYFIG, IFFLVVGVVIWYLFLQSGIHS, GAVNYLVLPLFAFVNAGVMFS, VIGGVTLAVALGLLAGKFLGI, ISGVALLGGIGFTVSLFIANL, and LGVLSGTVMAGILGYLVLHWV.

This sequence belongs to the NhaA Na(+)/H(+) (TC 2.A.33) antiporter family.

The protein resides in the cell inner membrane. It carries out the reaction Na(+)(in) + 2 H(+)(out) = Na(+)(out) + 2 H(+)(in). In terms of biological role, na(+)/H(+) antiporter that extrudes sodium in exchange for external protons. In Bacteroides fragilis (strain YCH46), this protein is Na(+)/H(+) antiporter NhaA.